We begin with the raw amino-acid sequence, 1327 residues long: Kinectin (1327 aa).

Topologically, residues 1–8 (MELYESTY) are cytoplasmic. Residues 9 to 29 (FIVLIPSVVITVIFLFFWLFM) traverse the membrane as a helical; Signal-anchor for type II membrane protein segment. Over 30–1327 (KETLYDEVLA…EVNQQLTKET (1298 aa)) the chain is Lumenal. Disordered stretches follow at residues 49–181 (STKT…EQDK) and 197–216 (LSHQDTKQEGGLGKKKGLSK). Residue N69 is glycosylated (N-linked (GlcNAc...) asparagine). 2 stretches are compositionally biased toward basic and acidic residues: residues 73–86 (RESDSEHVPRDFKL) and 111–135 (VRERQKKEKKQKPSLEEQVIKESDA). Residues S75 and S77 each carry the phosphoserine modification. Basic residues predominate over residues 163–173 (LKKKAGQKKSK). Residues 329–1327 (ELSGLLHQLQ…EVNQQLTKET (999 aa)) adopt a coiled-coil conformation. N1031 is a glycosylation site (N-linked (GlcNAc...) asparagine). S1060 is modified (phosphoserine). A glycan (N-linked (GlcNAc...) asparagine) is linked at N1066. S1290 carries the post-translational modification Phosphoserine.

This sequence belongs to the kinectin family. Expressed in all tissues examined including 12-day embryo, adult heart, brain, ovary, kidney, lung, small intestine, spleen, thymus and pancreas.

It is found in the endoplasmic reticulum membrane. Receptor for kinesin thus involved in kinesin-driven vesicle motility. Accumulates in integrin-based adhesion complexes (IAC) upon integrin aggregation by fibronectin. The chain is Kinectin from Mus musculus (Mouse).